The primary structure comprises 213 residues: ER lumen protein-retaining receptor erd-2.2 (213 aa).

Residues 1-2 (MN) lie on the Lumenal side of the membrane. Residues 3–21 (IFRISADMSHLLAIIILLL) form a helical membrane-spanning segment. Topologically, residues 22 to 35 (KIWKSRSCSGISAR) are cytoplasmic. A helical transmembrane segment spans residues 36-53 (SQILFALVFTARYLDLFS). Topologically, residues 54-61 (TYISLYNT) are lumenal. The helical transmembrane segment at 62-80 (TMKITFLAATYATVYLMFF) threads the bilayer. Topologically, residues 81-96 (KFRSTYMRESDTFRVE) are cytoplasmic. The helical transmembrane segment at 97–110 (LLIVPAAILALLIN) threads the bilayer. Residues 111-117 (HDFAPFE) are Lumenal-facing. Residues 118–137 (LLWTFSIYLEAVAILPQLFL) traverse the membrane as a helical segment. Over 138-149 (LQSTGSAEVITA) the chain is Cytoplasmic. A helical membrane pass occupies residues 150-168 (HYLFALGSYRALYIFNWIY). The Lumenal segment spans residues 169–178 (RYYTEDYFDP). The chain crosses the membrane as a helical span at residues 179–199 (IVVVAGIVQTVLYADFFYLYV). The Cytoplasmic segment spans residues 200–213 (TRVVQTRKGMELPI).

This sequence belongs to the ERD2 family.

Its subcellular location is the endoplasmic reticulum membrane. Functionally, required for the retention of luminal endoplasmic reticulum proteins. Determines the specificity of the luminal ER protein retention system. Also required for normal vesicular traffic through the Golgi. The polypeptide is ER lumen protein-retaining receptor erd-2.2 (Caenorhabditis elegans).